The primary structure comprises 102 residues: Putative septation protein SpoVG 2 (102 aa).

Belongs to the SpoVG family.

Could be involved in septation. This chain is Putative septation protein SpoVG 2, found in Listeria innocua serovar 6a (strain ATCC BAA-680 / CLIP 11262).